The chain runs to 107 residues: Thiosulfate sulfurtransferase GlpE (107 aa).

Residues 17–105 (RQGEAVLVDI…WLKAFPLETE (89 aa)) form the Rhodanese domain. The active-site Cysteine persulfide intermediate is the Cys65.

It belongs to the GlpE family.

It is found in the cytoplasm. It catalyses the reaction thiosulfate + hydrogen cyanide = thiocyanate + sulfite + 2 H(+). It carries out the reaction thiosulfate + [thioredoxin]-dithiol = [thioredoxin]-disulfide + hydrogen sulfide + sulfite + 2 H(+). Functionally, transferase that catalyzes the transfer of sulfur from thiosulfate to thiophilic acceptors such as cyanide or dithiols. May function in a CysM-independent thiosulfate assimilation pathway by catalyzing the conversion of thiosulfate to sulfite, which can then be used for L-cysteine biosynthesis. The polypeptide is Thiosulfate sulfurtransferase GlpE (Sodalis glossinidius (strain morsitans)).